Reading from the N-terminus, the 82-residue chain is Small ribosomal subunit protein bS16 (82 aa).

This sequence belongs to the bacterial ribosomal protein bS16 family.

The sequence is that of Small ribosomal subunit protein bS16 from Marinomonas sp. (strain MWYL1).